The chain runs to 513 residues: MVMAILTRQSRRKHLRVYNPPQQAAEVRYTPSATNSSAVPPVAVPPKPTADTILGKQYEDVRSVYSFGKELGRGQFGVTYLCTEIASGRQYACKSISKRKLVSKADREDIRREIQIMQHLSGQPNIVEFRGAYEDKSNVHVVMELCAGGELFDRIIAKGHYTERAAATICRAVVNVVNICHFMGVMHRDLKPENFLLATMEENAMLKATDFGLSVFIEEGKMYRDIVGSAYYVAPEVLRRSYGKEIDVWSAGVILYILLSGVPPFWAEIEKGIFDAILHEEIDFESQPWPSISESAKDLVRKMLTRDPKKRLTSAQVLQHQWLREGGEASDKPIDSAVLSRMKQFRAMNKLKKMALKVIASNLNEEEIKGLKQMFMNMDTDNSGTITYEELKAGLAKLGSKLSEAEVKQLMEAADVDGNGSIDYVEFITATMHRHKLERDEHLFKAFQYFDKDNSGFITRDELESALIEHEMGDTSTIREIISEVDTDNDGRINYEEFCAMMRGGMQQPMRLK.

The 259-residue stretch at 65 to 323 folds into the Protein kinase domain; that stretch reads YSFGKELGRG…SAQVLQHQWL (259 aa). ATP-binding positions include 71-79 and K94; that span reads LGRGQFGVT. Residue D189 is the Proton acceptor of the active site. Residues 329–359 are autoinhibitory domain; it reads ASDKPIDSAVLSRMKQFRAMNKLKKMALKVI. 4 consecutive EF-hand domains span residues 366–401, 402–437, 438–473, and 478–508; these read EEIK…LGSK, LSEA…RHKL, ERDE…HEMG, and IREI…GMQQ. Residues D379, D381, S383, T385, E390, D415, D417, N419, S421, E426, D451, D453, S455, E462, D486, D488, D490, R492, and E497 each coordinate Ca(2+).

The protein belongs to the protein kinase superfamily. Ser/Thr protein kinase family. CDPK subfamily.

The enzyme catalyses L-seryl-[protein] + ATP = O-phospho-L-seryl-[protein] + ADP + H(+). The catalysed reaction is L-threonyl-[protein] + ATP = O-phospho-L-threonyl-[protein] + ADP + H(+). Activated by calcium. Autophosphorylation may play an important role in the regulation of the kinase activity. In terms of biological role, may play a role in signal transduction pathways that involve calcium as a second messenger. The protein is Calcium-dependent protein kinase 2 (CPK2) of Zea mays (Maize).